The following is a 741-amino-acid chain: Subtilisin-like protease SBT4.4 (741 aa).

The signal sequence occupies residues 1 to 24 (MAKGTTFIFLFSSLLVLSLSSVSA). Positions 25 to 112 (DKDDHGDQQV…VFPSRKLKLQ (88 aa)) are cleaved as a propeptide — activation peptide. The 78-residue stretch at 34–111 (VYIVYLGSLP…SVFPSRKLKL (78 aa)) folds into the Inhibitor I9 domain. Positions 116–589 (SWNFMGLKEG…SGHVDPIDAI (474 aa)) constitute a Peptidase S8 domain. Residue D144 is the Charge relay system of the active site. Residues N175 and N195 are each glycosylated (N-linked (GlcNAc...) asparagine). H204 functions as the Charge relay system in the catalytic mechanism. Residues N227 and N357 are each glycosylated (N-linked (GlcNAc...) asparagine). The PA domain maps to 359–445 (TNYPLVYGKS…LSNDDYKSLV (87 aa)). N-linked (GlcNAc...) asparagine glycosylation is present at N449. Catalysis depends on S528, which acts as the Charge relay system. 4 N-linked (GlcNAc...) asparagine glycosylation sites follow: N565, N610, N623, and N654.

It belongs to the peptidase S8 family. The C-terminal propeptide is autocleaved.

The protein localises to the secreted. The chain is Subtilisin-like protease SBT4.4 from Arabidopsis thaliana (Mouse-ear cress).